Reading from the N-terminus, the 515-residue chain is 2-isopropylmalate synthase (515 aa).

A Pyruvate carboxyltransferase domain is found at 5–267; that stretch reads VIIFDTTLRD…STGIKHEEIH (263 aa). Residues aspartate 14, histidine 202, histidine 204, and asparagine 238 each contribute to the Mn(2+) site. Residues 392–515 are regulatory domain; that stretch reads KLNYLSVQSG…EMKQKKIATV (124 aa).

The protein belongs to the alpha-IPM synthase/homocitrate synthase family. LeuA type 1 subfamily. Homodimer. The cofactor is Mn(2+).

Its subcellular location is the cytoplasm. The enzyme catalyses 3-methyl-2-oxobutanoate + acetyl-CoA + H2O = (2S)-2-isopropylmalate + CoA + H(+). It functions in the pathway amino-acid biosynthesis; L-leucine biosynthesis; L-leucine from 3-methyl-2-oxobutanoate: step 1/4. Its function is as follows. Catalyzes the condensation of the acetyl group of acetyl-CoA with 3-methyl-2-oxobutanoate (2-ketoisovalerate) to form 3-carboxy-3-hydroxy-4-methylpentanoate (2-isopropylmalate). The chain is 2-isopropylmalate synthase from Vibrio parahaemolyticus serotype O3:K6 (strain RIMD 2210633).